We begin with the raw amino-acid sequence, 587 residues long: Dynein axonemal intermediate chain 2 (587 aa).

4 WD repeats span residues 214–254 (RPAS…NPVE), 261–302 (SHRD…EPTE), 362–401 (GHHG…SSIM), and 405–445 (YHTS…NNPS). Disordered stretches follow at residues 519-542 (LKER…DMKE) and 562-587 (KEQQ…IVHE).

Belongs to the dynein intermediate chain family. Consists of at least two heavy chains and a number of intermediate and light chains. Interacts with DNAAF2. Interacts with DNAAF6/PIH1D3. Interacts with HEATR2; probably involved in outer arm dynein assembly. Interacts with C16ORF71/DAAP1.

The protein resides in the cytoplasm. Its subcellular location is the cytoskeleton. It is found in the cilium axoneme. The protein localises to the dynein axonemal particle. Functionally, part of the dynein complex of multiciliated cell cilia. This Xenopus laevis (African clawed frog) protein is Dynein axonemal intermediate chain 2 (dnai2).